Consider the following 824-residue polypeptide: Probable ion channel POLLUX (824 aa).

Over residues 45 to 54 (DGDDSSNLPT) the composition is skewed to low complexity. The disordered stretch occupies residues 45-70 (DGDDSSNLPTVPNPEEKPVPVPSQSP). The next 4 helical transmembrane spans lie at 81 to 101 (FSLT…VMFL), 135 to 155 (AVVF…YMYL), 198 to 218 (LALL…LYAV), and 250 to 270 (IVSV…LGLI). 2 consecutive RCK N-terminal domains span residues 291-432 (SNHI…ETVV) and 550-699 (PEKI…DKSI). Residues 325–346 (LAERDKEEMETDIAKFEFDLMG) are a coiled coil.

It belongs to the castor/pollux (TC 1.A.1.23) family.

Its subcellular location is the nucleus membrane. The chain is Probable ion channel POLLUX from Arabidopsis thaliana (Mouse-ear cress).